The following is a 595-amino-acid chain: Adenine deaminase (595 aa).

It belongs to the metallo-dependent hydrolases superfamily. Adenine deaminase family. As to quaternary structure, homodimer. The cofactor is Mn(2+).

The enzyme catalyses adenine + H2O + H(+) = hypoxanthine + NH4(+). This chain is Adenine deaminase, found in Serratia proteamaculans (strain 568).